The primary structure comprises 535 residues: MTKYIFVTGGVVSSLGKGITAASLGRLLKNRGLNVTIQKFDPYINVDPGTMSPYQHGEVFVTDDGAETDLDLGHYERFIDINLNKYSNVTTGKIYSSVLQKERRGEYLGGTVQVIPHITNEIKERVYRSGRETNADVVITEIGGTVGDIESLPFLEAIRQIKSDIGRDNVMYIHCTLIPYLKAAGEMKTKPTQHSVKELRSLGIQPNIIVVRTEMPVSQDMKDKLALFCDIDTKAVIEARDADTLYAVPLSLQEQNMDQIVCDHLKLDNPAADMTEWTALVNKVRNLSKKTKIALVGKYVELQDAYISVVEALRHAGYSFDTDVEVKWVNAEHVTAENVKELVGDTDGILVPGGFGDRGVEGKIVAIQYARENKVPFLGICLGMQLASIEFARNVLGLEGANSSEINPDTPYAIIDLLPEQKDVEDLGGTLRLGLYPCKLAEETNAYNAYNEPVVYERHRHRYEFNNQFRPDMEKEGFVFSGTSPDGRLVEIIELKDHPWFVAAQFHPELVSRPNRPQPLFHDFVRASITNKESK.

Residues 1-267 (MTKYIFVTGG…DQIVCDHLKL (267 aa)) are amidoligase domain. CTP is bound at residue serine 13. Serine 13 is a binding site for UTP. 14 to 19 (SLGKGI) is an ATP binding site. Tyrosine 54 is an L-glutamine binding site. Aspartate 71 serves as a coordination point for ATP. Mg(2+)-binding residues include aspartate 71 and glutamate 141. CTP-binding positions include 148-150 (DIE), 188-193 (KTKPTQ), and lysine 224. Residues 188 to 193 (KTKPTQ) and lysine 224 each bind UTP. Residue 240–242 (RDA) coordinates ATP. Residues 292 to 534 (KIALVGKYVE…VRASITNKES (243 aa)) form the Glutamine amidotransferase type-1 domain. Glycine 354 is a binding site for L-glutamine. The active-site Nucleophile; for glutamine hydrolysis is the cysteine 381. L-glutamine is bound by residues 382 to 385 (LGMQ), glutamate 405, and arginine 462. Residues histidine 507 and glutamate 509 contribute to the active site.

Belongs to the CTP synthase family. In terms of assembly, homotetramer.

It catalyses the reaction UTP + L-glutamine + ATP + H2O = CTP + L-glutamate + ADP + phosphate + 2 H(+). The catalysed reaction is L-glutamine + H2O = L-glutamate + NH4(+). The enzyme catalyses UTP + NH4(+) + ATP = CTP + ADP + phosphate + 2 H(+). It participates in pyrimidine metabolism; CTP biosynthesis via de novo pathway; CTP from UDP: step 2/2. With respect to regulation, allosterically activated by GTP, when glutamine is the substrate; GTP has no effect on the reaction when ammonia is the substrate. The allosteric effector GTP functions by stabilizing the protein conformation that binds the tetrahedral intermediate(s) formed during glutamine hydrolysis. Inhibited by the product CTP, via allosteric rather than competitive inhibition. In terms of biological role, catalyzes the ATP-dependent amination of UTP to CTP with either L-glutamine or ammonia as the source of nitrogen. Regulates intracellular CTP levels through interactions with the four ribonucleotide triphosphates. The sequence is that of CTP synthase from Bacillus cereus (strain ATCC 14579 / DSM 31 / CCUG 7414 / JCM 2152 / NBRC 15305 / NCIMB 9373 / NCTC 2599 / NRRL B-3711).